A 510-amino-acid polypeptide reads, in one-letter code: Nucleosome assembly protein 1-like 3 (510 aa).

Disordered regions lie at residues 1 to 99 (MAEA…LGTN) and 161 to 311 (PTEE…KRED). A compositionally biased stretch (low complexity) spans 35–74 (SSSSSSSTSGSSSSSSTSGSSSSSGSGSSSSSSGSGSTSS). A compositionally biased stretch (acidic residues) spans 161–182 (PTEEECEWNSEDEEFSSDEEVQ). Basic and acidic residues-rich tracts occupy residues 200–229 (PKEN…EVPK), 235–246 (KAEEKADSKDCM), and 254–300 (EDPK…VDLK).

Belongs to the nucleosome assembly protein (NAP) family.

Its subcellular location is the nucleus. This chain is Nucleosome assembly protein 1-like 3 (NAP1L3), found in Pongo abelii (Sumatran orangutan).